The following is a 125-amino-acid chain: TSSK6-activating co-chaperone protein (125 aa).

Disordered stretches follow at residues 1–21 and 97–125; these read MEQH…ANAV and LAPG…QFSK. Over residues 103–125 the composition is skewed to low complexity; it reads SNNSSLPALSPNPLLNHLPQFSK.

It belongs to the TSACC family. In terms of assembly, interacts with HSP70. Associates with HSP90. Interacts with TSSK6; this interaction is direct and recruits TSACC to HSP90.

Its function is as follows. Co-chaperone that facilitates HSP-mediated activation of TSSK6. The sequence is that of TSSK6-activating co-chaperone protein (TSACC) from Macaca fascicularis (Crab-eating macaque).